A 173-amino-acid chain; its full sequence is Ribosome maturation factor RimM (173 aa).

A PRC barrel domain is found at 98-170 (VGDMTWDSFI…SLTVSLPEGL (73 aa)).

This sequence belongs to the RimM family. As to quaternary structure, binds ribosomal protein uS19.

It localises to the cytoplasm. An accessory protein needed during the final step in the assembly of 30S ribosomal subunit, possibly for assembly of the head region. Essential for efficient processing of 16S rRNA. May be needed both before and after RbfA during the maturation of 16S rRNA. It has affinity for free ribosomal 30S subunits but not for 70S ribosomes. This chain is Ribosome maturation factor RimM, found in Parabacteroides distasonis (strain ATCC 8503 / DSM 20701 / CIP 104284 / JCM 5825 / NCTC 11152).